The sequence spans 517 residues: 2-isopropylmalate synthase (517 aa).

The region spanning 7 to 269 (VIIFDTTLRD…ETGIDTTQIV (263 aa)) is the Pyruvate carboxyltransferase domain. Positions 16, 204, 206, and 240 each coordinate Mn(2+). Residues 395-517 (KFISQKISTE…KPKAQGSGTI (123 aa)) form a regulatory domain region.

Belongs to the alpha-IPM synthase/homocitrate synthase family. LeuA type 1 subfamily. In terms of assembly, homodimer. Requires Mn(2+) as cofactor.

Its subcellular location is the cytoplasm. It carries out the reaction 3-methyl-2-oxobutanoate + acetyl-CoA + H2O = (2S)-2-isopropylmalate + CoA + H(+). Its pathway is amino-acid biosynthesis; L-leucine biosynthesis; L-leucine from 3-methyl-2-oxobutanoate: step 1/4. In terms of biological role, catalyzes the condensation of the acetyl group of acetyl-CoA with 3-methyl-2-oxobutanoate (2-ketoisovalerate) to form 3-carboxy-3-hydroxy-4-methylpentanoate (2-isopropylmalate). This is 2-isopropylmalate synthase from Neisseria meningitidis serogroup A / serotype 4A (strain DSM 15465 / Z2491).